The following is a 234-amino-acid chain: 1-(5-phosphoribosyl)-5-[(5-phosphoribosylamino)methylideneamino] imidazole-4-carboxamide isomerase (234 aa).

Asp-9 acts as the Proton acceptor in catalysis. Asp-131 acts as the Proton donor in catalysis.

Belongs to the HisA/HisF family.

The protein localises to the cytoplasm. It catalyses the reaction 1-(5-phospho-beta-D-ribosyl)-5-[(5-phospho-beta-D-ribosylamino)methylideneamino]imidazole-4-carboxamide = 5-[(5-phospho-1-deoxy-D-ribulos-1-ylimino)methylamino]-1-(5-phospho-beta-D-ribosyl)imidazole-4-carboxamide. Its pathway is amino-acid biosynthesis; L-histidine biosynthesis; L-histidine from 5-phospho-alpha-D-ribose 1-diphosphate: step 4/9. The polypeptide is 1-(5-phosphoribosyl)-5-[(5-phosphoribosylamino)methylideneamino] imidazole-4-carboxamide isomerase (Staphylococcus saprophyticus subsp. saprophyticus (strain ATCC 15305 / DSM 20229 / NCIMB 8711 / NCTC 7292 / S-41)).